Consider the following 489-residue polypeptide: Blue-light-activated histidine kinase (489 aa).

The PAS domain maps to 19-93 (ATDPFRAAVE…AIKSAIAAEK (75 aa)). S-4a-FMN cysteine is present on C69. 2 PAC domains span residues 93 to 147 (KPID…ELEK) and 232 to 281 (YSIE…NKAL). The tract at residues 259-341 (NPLVLGIVQD…LLKENWAGAT (83 aa)) is HWE histidine kinase domain. H288 is modified (phosphohistidine; by autocatalysis).

In terms of processing, FMN binds covalently to cysteine after exposure to blue light and this bond is spontaneously broken in the dark.

The catalysed reaction is ATP + protein L-histidine = ADP + protein N-phospho-L-histidine.. Its function is as follows. Photosensitive kinase that is involved in increased bacterial virulence upon exposure to light. Once ejected from an infected animal host, sunlight acts as an environmental signal that increases the virulence of the bacterium, preparing it for infection of the next host. This photoreceptor protein is directly related to the bacterium's survival and replication within host macrophages, as it is required for optimal replication of bacteria inside macrophages. The sequence is that of Blue-light-activated histidine kinase from Brucella abortus (strain 2308).